Reading from the N-terminus, the 215-residue chain is 3-demethoxyubiquinol 3-hydroxylase (215 aa).

Fe cation contacts are provided by Glu-64, Glu-94, His-97, Glu-146, Glu-178, and His-181.

The protein belongs to the COQ7 family. The cofactor is Fe cation.

Its subcellular location is the cell membrane. The catalysed reaction is a 5-methoxy-2-methyl-3-(all-trans-polyprenyl)benzene-1,4-diol + AH2 + O2 = a 3-demethylubiquinol + A + H2O. Its pathway is cofactor biosynthesis; ubiquinone biosynthesis. Its function is as follows. Catalyzes the hydroxylation of 2-nonaprenyl-3-methyl-6-methoxy-1,4-benzoquinol during ubiquinone biosynthesis. This chain is 3-demethoxyubiquinol 3-hydroxylase, found in Azotobacter vinelandii (strain DJ / ATCC BAA-1303).